A 1601-amino-acid chain; its full sequence is MAQFQQTIDMQTLQAAAGRNSLVNDLASRRVYDNAVEELNARSRRPKVHFSKAVSTEQTLIATNAYPEFEISFTHTQSAVHSLAGGLRSLELEYLMMQVPFGSLTYDIGGNFSAHLFKGRDYVHCCMPNLDVRDIARHEGHKEAIYSYVNRLKRQQRPVPEYQRAAFNNYAENPHFVHCDKPFQQCELTTAYGTDTYAVALHSIYDIPVEEFGSALLRKNVKTCFAAFHFHENMLLDCDTVTLDEIGATFQKSGDNLSFFFHNESTLNYTHSFSNIIKYVCKTFFPASQRFVYHKEFLVTRVNTWYCKFTRVDTFTLFRGVYHNNVDCEEFYKAMDDAWHYKKTLAMLNAERTIFKDNAALNFWFPKVRDMVIVPLFDASITTGRMSRREIMVNKDFVYTVLNHIKTYQAKALTYANVLSFVESIRSRVIINGVTARSEWDTDKAILGPLAMTFFLITKLGHVQDEIILKKFQKFDRTTNELIWTSLCDALMGVIPSVKETLVRGGFVKVAEQALEIKVPELYCTFADRLVLQYKKAEEFQSCDLSKPLEESEKYYNALSELSVLENLDSFDLEAFKTLCQQKNVDPDMAAKVVVAIMKSELTLPFKKPTEEEISESLKPGEGSCAEHKEVLSLQNDAPFPCVKNLVEGSVPAYGMCPKGGGFDKLDVDIADFHLKSVDAVKKGTMMSAVYTGSIKVQQMKNYIDYLSASLAATVSNLCKVLRDVHGVDPESQEKSGVWDVRRGRWLLKPNAKSHAWGVAEDANHKLVIVLLNWDDGKPVCDETWFRVAVSSDSLIYSDMGKLKTLTSCSPNGEPPEPNAKVILVDGVPGCGKTKEIIEKVNFSEDLILVPGKEASKMIIRRANQAGVIRADKDNVRTVDSFLMHPSRRVFKRLFIDEGLMLHTGCVNFLLLLSQCDVAYVYGDTKQIPFICRVANFPYPAHFAKLVADEKEVRRVTLRCPADVTYFLNKKYDGAVMCTSAVERSVKAEVVRGKGALNPITLPLEGKILTFTQADKFELLEKGYKDVNTVHEVQGETYEKTAIVRLTSTPLEIISSASPHVLVALTRHTTCCKYYTVVLDPMVNVISEMEKLSNFLLDMYRVEAGVQYQLQIDAVFRDSNLFVQTPKSGDWRDMQFYYDALLPGNSTILNEFDAVTMNLRDISLNVKDCRIDFSKSVQLPKEQPIFLKPKIRTAAEMPRTAGLLENLVAMIKRNMNAPDLTGTIDIEDTASLVVEKFWDSYVDKEFSGTNEMTMTRESFSRWLSKQESSTVGQLADFNFVDLPAVDEYKHMIKSQPKQKLDLSIQDEYPALQTIVYHSKKINAIFGPMFSELTRMLLERIDSSKFLFYTRKTPAQIEDFFSDLDSTQAMEILELDISKYDKSQNEFHCAVEYKIWEKLGIDEWLAEVWKQGHRKTTLKDYTAGVKTCLWYQRKSGDVTTFIGNTIIIAACLSSMIPMDKVIKAAFCGDDSLIYIPKGLDLPDIQAGANLMWNFEAKLFRKKYGYFCGRYVIHHDRGAIVYYDPLKLISKLGCKHIRDVVHLEELRESLCDVASNLNNCAYFSQLDEAVAEVHKTAVGGSFAFCSIIKYLSDKRLFRDLFFV.

A methyltransferase region spans residues 50–436 (FSKAVSTEQT…SRVIINGVTA (387 aa)). One can recognise an Alphavirus-like MT domain in the interval 72-280 (SFTHTQSAVH…HSFSNIIKYV (209 aa)). Positions 795–954 (LIYSDMGKLK…KLVADEKEVR (160 aa)) constitute a (+)RNA virus helicase ATP-binding domain. Positions 823-1076 (ILVDGVPGCG…RHTTCCKYYT (254 aa)) are helicase. 827-834 (GVPGCGKT) contacts ATP. Residues 955–1107 (RVTLRCPADV…DMYRVEAGVQ (153 aa)) form the (+)RNA virus helicase C-terminal domain. The region spanning 1369-1482 (MEILELDISK…YIPKGLDLPD (114 aa)) is the RdRp catalytic domain.

It belongs to the ssRNA positive-strand viruses RNA-directed RNA polymerase family. Heterodimer of a large and a small subunit.

It carries out the reaction RNA(n) + a ribonucleoside 5'-triphosphate = RNA(n+1) + diphosphate. The catalysed reaction is ATP + H2O = ADP + phosphate + H(+). Is an RNA-dependent RNA polymerase active in viral RNA replication. In terms of biological role, is a methyltransferase active in RNA capping and an RNA helicase. Methyltransferase displays a cytoplasmic capping enzyme activity. This function is necessary since all viral RNAs are synthesized in the cytoplasm, and host capping enzymes are restricted to the nucleus. Helicase region probably exhibits NTPase and RNA unwinding activities (Potential). It also acts as a suppressor of RNA-mediated gene silencing, also known as post-transcriptional gene silencing (PTGS), a mechanism of plant viral defense that limits the accumulation of viral RNAs. May mediate silencing suppression through either inhibition of HEN1-mediated siRNA or siRNA demethylation. The sequence is that of Replicase large subunit from Brassicaceae (TVCV).